Here is a 326-residue protein sequence, read N- to C-terminus: MTRFARIIGTGSYLPPKRVTNDELAAQLAEKGIETSDEWIVSRSGIRARHFAEPDVTCSDLAVRAAERAIEAAGIDRSELDLILVATSTPDFVFPSTACLVQQKLGITNGCAAFDVQAVCSGFVYALATADKFIRSGAYRNVLVIGSEVFSRIIDFSDRTTCVLFGDGAGAVVLQASDEPGILSTALHADGSHANILCVPGNVAAGAIQGSAFLYMDGQAVFKLAVTVLDKVAREALAAAELDASQVDWLIPHQANIRIMQGTTKKLGLSNERLIVTVDEHGNTSAASIPLALDVAVRDGRIQRGQHVMLEGVGGGFTWGAALLRF.

Catalysis depends on residues Cys-120 and His-253. The ACP-binding stretch occupies residues 254–258 (QANIR). The active site involves Asn-283.

The protein belongs to the thiolase-like superfamily. FabH family. In terms of assembly, homodimer.

The protein resides in the cytoplasm. The enzyme catalyses malonyl-[ACP] + acetyl-CoA + H(+) = 3-oxobutanoyl-[ACP] + CO2 + CoA. It functions in the pathway lipid metabolism; fatty acid biosynthesis. Catalyzes the condensation reaction of fatty acid synthesis by the addition to an acyl acceptor of two carbons from malonyl-ACP. Catalyzes the first condensation reaction which initiates fatty acid synthesis and may therefore play a role in governing the total rate of fatty acid production. Possesses both acetoacetyl-ACP synthase and acetyl transacylase activities. Its substrate specificity determines the biosynthesis of branched-chain and/or straight-chain of fatty acids. The sequence is that of Beta-ketoacyl-[acyl-carrier-protein] synthase III from Ralstonia pickettii (strain 12J).